The sequence spans 112 residues: Integration host factor subunit alpha (112 aa).

This sequence belongs to the bacterial histone-like protein family. As to quaternary structure, heterodimer of an alpha and a beta chain.

In terms of biological role, this protein is one of the two subunits of integration host factor, a specific DNA-binding protein that functions in genetic recombination as well as in transcriptional and translational control. The chain is Integration host factor subunit alpha from Sinorhizobium fredii (strain NBRC 101917 / NGR234).